The following is a 705-amino-acid chain: 3-hydroxypropionate--CoA ligase [ADP-forming] (705 aa).

One can recognise an ATP-grasp domain in the interval 25–61 (KSILKNYGVKVPPYALVTSAEEAAKEAKKIGFPLVMK). Residue 51-61 (AKKIGFPLVMK) coordinates ATP.

It in the N-terminal section; belongs to the acetate CoA ligase beta subunit family. The protein in the C-terminal section; belongs to the acetate CoA ligase alpha subunit family. It depends on Mg(2+) as a cofactor. Mn(2+) serves as cofactor.

It carries out the reaction 3-hydroxypropanoate + ATP + CoA = 3-hydroxypropanoyl-CoA + ADP + phosphate. Its function is as follows. Involved in thaumarchaeal hydroxypropionate/hydroxybutyrate (HP/HB) cycle, a modified version of the autotrophic HP/HB cycle of Crenarchaeota. Catalyzes the formation of 3-hydroxypropionyl-CoA, ADP and phosphate from 3-hydroxypropionate, coenzyme A (CoA) and ATP. Can also use 4-hydroxybutyrate, propionate and butyrate, with poor catalytic efficiency. The chain is 3-hydroxypropionate--CoA ligase [ADP-forming] from Nitrosopumilus maritimus (strain SCM1).